Here is a 177-residue protein sequence, read N- to C-terminus: Ribosome rescue factor SmrB (177 aa).

The interval 22–45 (SKKLRQDTIIHQPSKNFSEQQKQR) is disordered. Positions 30–41 (IIHQPSKNFSEQ) are enriched in polar residues. One can recognise a Smr domain in the interval 98-173 (LDMHGMKQDE…GAGAILVLLS (76 aa)).

This sequence belongs to the SmrB family. In terms of assembly, associates with collided ribosomes, but not with correctly translating polysomes.

Its function is as follows. Acts as a ribosome collision sensor. Detects stalled/collided disomes (pairs of ribosomes where the leading ribosome is stalled and a second ribosome has collided with it) and endonucleolytically cleaves mRNA at the 5' boundary of the stalled ribosome. Stalled/collided disomes form a new interface (primarily via the 30S subunits) that binds SmrB. Cleaved mRNA becomes available for tmRNA ligation, leading to ribosomal subunit dissociation and rescue of stalled ribosomes. The polypeptide is Ribosome rescue factor SmrB (Aliivibrio salmonicida (strain LFI1238) (Vibrio salmonicida (strain LFI1238))).